The chain runs to 320 residues: 4-diphosphocytidyl-2-C-methyl-D-erythritol kinase (320 aa).

Residue K20 is part of the active site. Residue 112–122 (PVAGGMGGGSA) participates in ATP binding. D154 is a catalytic residue.

This sequence belongs to the GHMP kinase family. IspE subfamily.

The catalysed reaction is 4-CDP-2-C-methyl-D-erythritol + ATP = 4-CDP-2-C-methyl-D-erythritol 2-phosphate + ADP + H(+). It functions in the pathway isoprenoid biosynthesis; isopentenyl diphosphate biosynthesis via DXP pathway; isopentenyl diphosphate from 1-deoxy-D-xylulose 5-phosphate: step 3/6. Its function is as follows. Catalyzes the phosphorylation of the position 2 hydroxy group of 4-diphosphocytidyl-2C-methyl-D-erythritol. The protein is 4-diphosphocytidyl-2-C-methyl-D-erythritol kinase of Pseudarthrobacter chlorophenolicus (strain ATCC 700700 / DSM 12829 / CIP 107037 / JCM 12360 / KCTC 9906 / NCIMB 13794 / A6) (Arthrobacter chlorophenolicus).